We begin with the raw amino-acid sequence, 179 residues long: uncharacterized protein (179 aa).

A signal peptide spans 1 to 19 (MNTNVFRLLLLGSLFSLSA). C20 is lipidated: N-palmitoyl cysteine. Residue C20 is the site of S-diacylglycerol cysteine attachment.

Its subcellular location is the cell membrane. This is an uncharacterized protein from Escherichia coli (strain K12).